Here is a 317-residue protein sequence, read N- to C-terminus: Ribosomal protein L11 methyltransferase (317 aa).

Residues threonine 158, glycine 179, aspartate 201, and asparagine 244 each contribute to the S-adenosyl-L-methionine site.

The protein belongs to the methyltransferase superfamily. PrmA family.

It localises to the cytoplasm. The enzyme catalyses L-lysyl-[protein] + 3 S-adenosyl-L-methionine = N(6),N(6),N(6)-trimethyl-L-lysyl-[protein] + 3 S-adenosyl-L-homocysteine + 3 H(+). Its function is as follows. Methylates ribosomal protein L11. The chain is Ribosomal protein L11 methyltransferase from Streptococcus pyogenes serotype M6 (strain ATCC BAA-946 / MGAS10394).